Here is a 95-residue protein sequence, read N- to C-terminus: Antitoxin VapB41 (95 aa).

Antitoxin component of a type II toxin-antitoxin (TA) system. The sequence is that of Antitoxin VapB41 (vapB41) from Mycobacterium tuberculosis (strain CDC 1551 / Oshkosh).